Consider the following 565-residue polypeptide: Periplasmic trehalase (565 aa).

Residues 1 to 30 (MKSPAPSRPQKMALIPACIFLCFAALSVQA) form the signal peptide. Substrate-binding positions include arginine 152, 159-160 (WD), asparagine 196, 205-207 (RSQ), 277-279 (RPE), and glycine 310. Residues aspartate 312 and glutamate 496 each act as proton donor/acceptor in the active site. Substrate is bound at residue glutamate 511. A disordered region spans residues 539–565 (CDNVPATRPLSESTTQPVKPKEAEPTL).

It belongs to the glycosyl hydrolase 37 family. As to quaternary structure, monomer.

The protein localises to the periplasm. It carries out the reaction alpha,alpha-trehalose + H2O = alpha-D-glucose + beta-D-glucose. Its function is as follows. Provides the cells with the ability to utilize trehalose at high osmolarity by splitting it into glucose molecules that can subsequently be taken up by the phosphotransferase-mediated uptake system. This chain is Periplasmic trehalase, found in Shigella dysenteriae serotype 1 (strain Sd197).